Here is a 475-residue protein sequence, read N- to C-terminus: Nitrogenase vanadium-iron protein beta chain (475 aa).

Residues C31, C56, C115, and S153 each coordinate [8Fe-7S] cluster.

The protein belongs to the NifD/NifK/NifE/NifN family. In terms of assembly, hexamer of two alpha, two beta, and two delta chains. It depends on [8Fe-7S] cluster as a cofactor.

It catalyses the reaction N2 + 8 reduced [2Fe-2S]-[ferredoxin] + 16 ATP + 16 H2O = H2 + 8 oxidized [2Fe-2S]-[ferredoxin] + 2 NH4(+) + 16 ADP + 16 phosphate + 6 H(+). Its function is as follows. This vanadium-iron protein is part of the nitrogenase complex that catalyzes the key enzymatic reactions in nitrogen fixation. In Azotobacter vinelandii, this protein is Nitrogenase vanadium-iron protein beta chain (vnfK).